Here is a 938-residue protein sequence, read N- to C-terminus: LPS-assembly protein LptD (938 aa).

A signal peptide spans 1-33 (MAVKHPAFRKKFPLLVTGSLLALQPAFSLQSFA). Residues 52-96 (KTATSALPPRPQHSRSAVSTTSGSATATATKQEPAPVLVTESKGR) are disordered. Residues 65 to 81 (SRSAVSTTSGSATATAT) show a composition bias toward low complexity.

The protein belongs to the LptD family. As to quaternary structure, component of the lipopolysaccharide transport and assembly complex. Interacts with LptE and LptA.

Its subcellular location is the cell outer membrane. Its function is as follows. Together with LptE, is involved in the assembly of lipopolysaccharide (LPS) at the surface of the outer membrane. This Ectopseudomonas mendocina (strain ymp) (Pseudomonas mendocina) protein is LPS-assembly protein LptD.